Consider the following 150-residue polypeptide: Probable histone H2A.7 (150 aa).

Residues 1–12 show a composition bias toward basic residues; the sequence is MESTGKVKKAFG. Disordered stretches follow at residues 1–27 and 129–150; these read MESTGKVKKAFGGRKPPGAPKTKSVSK and KSATKPAEEKATKSPVKSPKKA. Ser146 is modified (phosphoserine). An SPKK motif motif is present at residues 146–149; sequence SPKK.

The protein belongs to the histone H2A family. As to quaternary structure, the nucleosome is a histone octamer containing two molecules each of H2A, H2B, H3 and H4 assembled in one H3-H4 heterotetramer and two H2A-H2B heterodimers. The octamer wraps approximately 147 bp of DNA. In terms of processing, not ubiquitinated. Strong expression through-out the roots and leaves. Also found in meristems and dividing cells.

The protein localises to the nucleus. It is found in the chromosome. Core component of nucleosome. Nucleosomes wrap and compact DNA into chromatin, limiting DNA accessibility to the cellular machineries which require DNA as a template. Histones thereby play a central role in transcription regulation, DNA repair, DNA replication and chromosomal stability. DNA accessibility is regulated via a complex set of post-translational modifications of histones, also called histone code, and nucleosome remodeling. This Arabidopsis thaliana (Mouse-ear cress) protein is Probable histone H2A.7.